Here is a 239-residue protein sequence, read N- to C-terminus: Cysteine-rich venom protein kaouthin-1 (239 aa).

An N-terminal signal peptide occupies residues 1 to 18 (MIAFSLLCLAAVLRQSFG). The SCP domain occupies 37 to 165 (VDLHNSLRRR…AWSYFYVCQY (129 aa)). Cystine bridges form between Cys-74-Cys-152, Cys-91-Cys-166, Cys-147-Cys-163, Cys-185-Cys-192, Cys-188-Cys-197, Cys-201-Cys-234, Cys-210-Cys-228, and Cys-219-Cys-232. One can recognise a ShKT domain in the interval 201-234 (CTIYNKLTNCDSLLKQGSCQDDWIKSNCPASCFC).

It belongs to the CRISP family. Expressed by the venom gland.

Its subcellular location is the secreted. Inhibits calcium-activated potassium channels (KCa), voltage-gated potassium channel (Kv), and the calcium release channel/ryanodine receptor (RyR). The chain is Cysteine-rich venom protein kaouthin-1 from Naja kaouthia (Monocled cobra).